We begin with the raw amino-acid sequence, 428 residues long: Phosphomethylpyrimidine synthase 1 (428 aa).

Substrate-binding positions include N65, M94, Y123, H158, 180–182 (SRG), 221–224 (DGMR), and E260. H264 is a Zn(2+) binding site. Y287 contacts substrate. H328 contributes to the Zn(2+) binding site. [4Fe-4S] cluster is bound by residues C405, C408, and C412.

Belongs to the ThiC family. [4Fe-4S] cluster serves as cofactor.

It catalyses the reaction 5-amino-1-(5-phospho-beta-D-ribosyl)imidazole + S-adenosyl-L-methionine = 4-amino-2-methyl-5-(phosphooxymethyl)pyrimidine + CO + 5'-deoxyadenosine + formate + L-methionine + 3 H(+). It participates in cofactor biosynthesis; thiamine diphosphate biosynthesis. Its function is as follows. Catalyzes the synthesis of the hydroxymethylpyrimidine phosphate (HMP-P) moiety of thiamine from aminoimidazole ribotide (AIR) in a radical S-adenosyl-L-methionine (SAM)-dependent reaction. The chain is Phosphomethylpyrimidine synthase 1 from Methanosarcina mazei (strain ATCC BAA-159 / DSM 3647 / Goe1 / Go1 / JCM 11833 / OCM 88) (Methanosarcina frisia).